The chain runs to 162 residues: ATP synthase subunit b 1 (162 aa).

Residues 1–21 traverse the membrane as a helical segment; it reads MLLTAEFWVAVAFVAFLVIVW.

It belongs to the ATPase B chain family. In terms of assembly, F-type ATPases have 2 components, F(1) - the catalytic core - and F(0) - the membrane proton channel. F(1) has five subunits: alpha(3), beta(3), gamma(1), delta(1), epsilon(1). F(0) has three main subunits: a(1), b(2) and c(10-14). The alpha and beta chains form an alternating ring which encloses part of the gamma chain. F(1) is attached to F(0) by a central stalk formed by the gamma and epsilon chains, while a peripheral stalk is formed by the delta and b chains.

The protein resides in the cell inner membrane. Its function is as follows. F(1)F(0) ATP synthase produces ATP from ADP in the presence of a proton or sodium gradient. F-type ATPases consist of two structural domains, F(1) containing the extramembraneous catalytic core and F(0) containing the membrane proton channel, linked together by a central stalk and a peripheral stalk. During catalysis, ATP synthesis in the catalytic domain of F(1) is coupled via a rotary mechanism of the central stalk subunits to proton translocation. Functionally, component of the F(0) channel, it forms part of the peripheral stalk, linking F(1) to F(0). This Methylorubrum extorquens (strain PA1) (Methylobacterium extorquens) protein is ATP synthase subunit b 1.